The chain runs to 1218 residues: Formin-A (1218 aa).

Residues 1–108 (MADKLYQIKL…ILGEACNYSV (108 aa)) form the C2 domain. In terms of domain architecture, GBD/FH3 spans 139–539 (EEKKRHDEIQ…QISLRDKNIG (401 aa)). The stretch at 563–638 (LKSQIESLKK…QLKLTQGTAK (76 aa)) forms a coiled coil. A disordered region spans residues 634–762 (QGTAKPDSAA…KAAAPPRKEV (129 aa)). Residues 649–747 (APPPPPPPMT…FGKGPPPPPG (99 aa)) show a composition bias toward pro residues. Residues 652–737 (PPPPPMTGGG…AGGPPPPPPP (86 aa)) form the FH1 domain. Residues 759–1155 (RKEVPVPALK…IAKREAAKKL (397 aa)) form the FH2 domain. Residues 1034-1061 (SLSQVQAEVATLRKEFVQVQKSIETLNS) adopt a coiled-coil conformation. Disordered regions lie at residues 1153-1179 (KKLK…TVEV) and 1198-1218 (KNRR…PIDL). In terms of domain architecture, DAD spans 1174 to 1209 (GETVEVKESVVDDLLDTIASGDAFKNRRRRARKTDQ).

Belongs to the formin homology family. Diaphanous subfamily. In terms of assembly, interacts (via GBD/FH3 domain) with activated Rho-GTPases.

Formins play an important role in the nucleation of actin and the formation of linear actin filaments. This Dictyostelium discoideum (Social amoeba) protein is Formin-A (forA).